The chain runs to 261 residues: Succinate dehydrogenase iron-sulfur subunit (261 aa).

A 2Fe-2S ferredoxin-type domain is found at 28 to 119 (RKVKVYRYDP…DIKIYPLPHM (92 aa)). [2Fe-2S] cluster contacts are provided by Cys80, Cys85, and Cys100. Residues 161–191 (DREKLDGLYECILCACCSTSCPSYWWNGDKY) form the 4Fe-4S ferredoxin-type domain. 3 residues coordinate [4Fe-4S] cluster: Cys171, Cys174, and Cys177. A [3Fe-4S] cluster-binding site is contributed by Cys181. Trp186 contacts a ubiquinone. Residues Cys228 and Cys234 each coordinate [3Fe-4S] cluster. Cys238 lines the [4Fe-4S] cluster pocket.

It belongs to the succinate dehydrogenase/fumarate reductase iron-sulfur protein family. In terms of assembly, part of an enzyme complex containing four subunits: a flavoprotein, an iron-sulfur, cytochrome b-556, and a hydrophobic anchor protein. [2Fe-2S] cluster is required as a cofactor. [3Fe-4S] cluster serves as cofactor. Requires [4Fe-4S] cluster as cofactor.

It carries out the reaction a quinone + succinate = fumarate + a quinol. It participates in carbohydrate metabolism; tricarboxylic acid cycle; fumarate from succinate (bacterial route): step 1/1. This is Succinate dehydrogenase iron-sulfur subunit (sdhB) from Rickettsia prowazekii (strain Madrid E).